The chain runs to 471 residues: Lincomycin resistance protein LmrB (471 aa).

Helical transmembrane passes span 15–34 (PIIASFLMAGFIGLFSETAL), 55–77 (LTTGYLLTLGILVPISGLLLQWF), 82–104 (LFFTAVSFSIAGTLIAALSPTFA), 111–131 (VVQAVGTALLLPLMFNTILLI), 141–163 (MGMIGLVIMFAPAVGPTISGLIL), 170–187 (WIFWISLPFLIIALLFGM), 202–224 (DILSIILSTLGFGGVVFAFSSAG), 231–253 (ATVLVSIIVGGIALGLFVWRQLT), 268–290 (MFTLGLILVFISFMMILSTMILL), 297–319 (SLALAAFSAGLVLLPGGVLNGLM), 329–351 (AYGPRALVIPGFIVAVIALFFLT), 358–380 (SALTIIVLHSVLMIGISMVMMPA), and 445–467 (GIQNAFVFGLIMACIGLLCSLFI).

Belongs to the major facilitator superfamily. EmrB family.

Its subcellular location is the cell membrane. In terms of biological role, proton-dependent transporter. May mediate the efflux of lincomycin. This is Lincomycin resistance protein LmrB (lmrB) from Listeria innocua serovar 6a (strain ATCC BAA-680 / CLIP 11262).